The chain runs to 144 residues: Large ribosomal subunit protein uL15 (144 aa).

Residues 1–54 are disordered; it reads MRLNTLSPAAGAKHAPKRVGRGMGSGLGKTAGRGHKGQKSRSGGGVRPGFEGGQ. 2 stretches are compositionally biased toward gly residues: residues 21 to 31 and 42 to 52; these read RGMGSGLGKTA and SGGGVRPGFEG.

The protein belongs to the universal ribosomal protein uL15 family. Part of the 50S ribosomal subunit.

In terms of biological role, binds to the 23S rRNA. This Shewanella oneidensis (strain ATCC 700550 / JCM 31522 / CIP 106686 / LMG 19005 / NCIMB 14063 / MR-1) protein is Large ribosomal subunit protein uL15.